Here is a 128-residue protein sequence, read N- to C-terminus: Large ribosomal subunit protein bL20 (128 aa).

Belongs to the bacterial ribosomal protein bL20 family.

Its function is as follows. Binds directly to 23S ribosomal RNA and is necessary for the in vitro assembly process of the 50S ribosomal subunit. It is not involved in the protein synthesizing functions of that subunit. The protein is Large ribosomal subunit protein bL20 of Anaplasma phagocytophilum (strain HZ).